The sequence spans 424 residues: Glutamate-1-semialdehyde 2,1-aminomutase (424 aa).

An N6-(pyridoxal phosphate)lysine modification is found at K263.

This sequence belongs to the class-III pyridoxal-phosphate-dependent aminotransferase family. HemL subfamily. In terms of assembly, homodimer. Pyridoxal 5'-phosphate is required as a cofactor.

It is found in the cytoplasm. It carries out the reaction (S)-4-amino-5-oxopentanoate = 5-aminolevulinate. It functions in the pathway porphyrin-containing compound metabolism; protoporphyrin-IX biosynthesis; 5-aminolevulinate from L-glutamyl-tRNA(Glu): step 2/2. In Campylobacter jejuni subsp. jejuni serotype O:6 (strain 81116 / NCTC 11828), this protein is Glutamate-1-semialdehyde 2,1-aminomutase.